The chain runs to 92 residues: Small ribosomal subunit protein uS19 (92 aa).

This sequence belongs to the universal ribosomal protein uS19 family.

Its function is as follows. Protein S19 forms a complex with S13 that binds strongly to the 16S ribosomal RNA. The sequence is that of Small ribosomal subunit protein uS19 from Gloeothece citriformis (strain PCC 7424) (Cyanothece sp. (strain PCC 7424)).